Consider the following 278-residue polypeptide: Phosphatidylglycerol--prolipoprotein diacylglyceryl transferase (278 aa).

4 helical membrane-spanning segments follow: residues 18 to 38 (IQVH…TILA), 55 to 75 (LILW…VIFE), 90 to 110 (WDGG…VYLF), and 115 to 135 (WIPV…AQGI). Arg137 is a binding site for a 1,2-diacyl-sn-glycero-3-phospho-(1'-sn-glycerol). Transmembrane regions (helical) follow at residues 177 to 197 (QPTF…LMSL), 207 to 227 (GEVF…VEGM), and 237 to 257 (IRVS…ILVF).

Belongs to the Lgt family.

The protein localises to the cell membrane. The catalysed reaction is L-cysteinyl-[prolipoprotein] + a 1,2-diacyl-sn-glycero-3-phospho-(1'-sn-glycerol) = an S-1,2-diacyl-sn-glyceryl-L-cysteinyl-[prolipoprotein] + sn-glycerol 1-phosphate + H(+). It functions in the pathway protein modification; lipoprotein biosynthesis (diacylglyceryl transfer). Functionally, catalyzes the transfer of the diacylglyceryl group from phosphatidylglycerol to the sulfhydryl group of the N-terminal cysteine of a prolipoprotein, the first step in the formation of mature lipoproteins. The protein is Phosphatidylglycerol--prolipoprotein diacylglyceryl transferase of Pediococcus pentosaceus (strain ATCC 25745 / CCUG 21536 / LMG 10740 / 183-1w).